The primary structure comprises 323 residues: C-type lectin domain family 11 member A (323 aa).

The N-terminal stretch at 1–21 (MQAAWLLGALVVPQLLGFGHG) is a signal peptide. 2 disordered regions span residues 55-106 (LGLP…TPED) and 272-295 (LGAQ…TLEN). Residues 61–63 (RGD) carry the Cell attachment site motif. Acidic residues predominate over residues 74–90 (EDWEMEEDQGEEEEEEA). The region spanning 183-320 (LGHKCFLLSR…CQRRLYYVCE (138 aa)) is the C-type lectin domain. 2 disulfide bridges follow: Cys204-Cys319 and Cys296-Cys311.

O-glycosylated. Probably sulfated on the O-glycans. In terms of tissue distribution, expressed in skeletal tissues including bone marrow, chondrocytes, primary ossification center-associated cells, the perichondrium and periosteum. Lower levels of expression were detected in spleen, thymus, appendix and fetal liver.

The protein localises to the cytoplasm. It is found in the secreted. Functionally, promotes osteogenesis by stimulating the differentiation of mesenchymal progenitors into mature osteoblasts. Important for repair and maintenance of adult bone. This is C-type lectin domain family 11 member A (CLEC11A) from Homo sapiens (Human).